A 681-amino-acid chain; its full sequence is Sorting nexin-41 (681 aa).

The segment covering 1 to 12 (MSTDNLFEDIEQ) has biased composition (acidic residues). Residues 1 to 94 (MSTDNLFEDI…HNTSLNNGYP (94 aa)) form a disordered region. The segment covering 13–24 (DNNPSFYGNPSI) has biased composition (polar residues). The PX domain maps to 113-236 (NDSQLQVDII…KFFDPNYELC (124 aa)). Residues Arg-151, Ser-153, Lys-177, and Arg-200 each contribute to the a 1,2-diacyl-sn-glycero-3-phospho-(1D-myo-inositol-3-phosphate) site. Disordered regions lie at residues 475 to 505 (LASR…TENF) and 558 to 597 (TATG…QTSI). 2 stretches are compositionally biased toward low complexity: residues 482–497 (DNDS…NNND) and 558–589 (TATG…QSQS).

This sequence belongs to the sorting nexin family.

It is found in the endosome membrane. The protein resides in the endomembrane system. May be required for cytoplasm to vacuole transport (Cvt) and pexophagy. This is Sorting nexin-41 (SNX41) from Candida albicans (strain SC5314 / ATCC MYA-2876) (Yeast).